A 302-amino-acid polypeptide reads, in one-letter code: Glycine N-acyltransferase-like protein 1 (302 aa).

The protein belongs to the glycine N-acyltransferase family. Expressed in liver and kidney and, at lower levels, in pancreas, testis, ovary and stomach.

It carries out the reaction an acyl-CoA + L-glutamine = an N(2)-acyl-L-glutamine + CoA + H(+). Functionally, acyltransferase which transfers an acyl group to the N-terminus of glutamine. Can use phenylacetyl-CoA as an acyl donor. The protein is Glycine N-acyltransferase-like protein 1 of Homo sapiens (Human).